Here is a 439-residue protein sequence, read N- to C-terminus: Na(+)/H(+) antiporter NhaA (439 aa).

11 helical membrane passes run 12 to 32 (SMNI…AIIA), 67 to 87 (MIEF…GLEI), 103 to 123 (ALPF…YMSI), 133 to 153 (GLAI…SLLG), 162 to 182 (IFLT…IALF), 186 to 206 (HVSY…YFIG), 214 to 234 (IFFL…GIHS), 314 to 334 (ILPL…GELV), 341 to 361 (VAAG…WLAI), 379 to 399 (GIAL…NLSF), and 412 to 432 (FGVL…LRIV).

It belongs to the NhaA Na(+)/H(+) (TC 2.A.33) antiporter family.

The protein localises to the cell inner membrane. The enzyme catalyses Na(+)(in) + 2 H(+)(out) = Na(+)(out) + 2 H(+)(in). Na(+)/H(+) antiporter that extrudes sodium in exchange for external protons. This chain is Na(+)/H(+) antiporter NhaA, found in Bacteroides thetaiotaomicron (strain ATCC 29148 / DSM 2079 / JCM 5827 / CCUG 10774 / NCTC 10582 / VPI-5482 / E50).